The sequence spans 146 residues: uncharacterized protein (146 aa).

Residues 7–27 (FVLSITIVLVILIIIAFIWYN) traverse the membrane as a helical segment.

It belongs to the asfivirus E146L family.

The protein resides in the host membrane. Its subcellular location is the virion. This is an uncharacterized protein from African swine fever virus (strain Badajoz 1971 Vero-adapted) (Ba71V).